The following is a 934-amino-acid chain: Intimin (934 aa).

A signal peptide spans 1-39; that stretch reads MITHGCYTRTRHKHKLKKTLIMLSAGLGLFFYVNQNSFA. The interval 40–153 is peptidoglycan-binding; that stretch reads NGENYFKLGS…KLTKMSPDVT (114 aa). The segment at 40 to 153 is sufficient for homodimerization; it reads NGENYFKLGS…KLTKMSPDVT (114 aa). A required for periplasmic localization region spans residues 40–212; it reads NGENYFKLGS…LQAWLQHYGT (173 aa). One can recognise a LysM domain in the interval 63–112; sequence LFYTLKTGETVADLSKSQDINLSTIWSLNKHLYSSESEMMKAAPGQQIIL. Residues 210 to 411 are inverse autotransporter; the sequence is YGTAEVNLQS…LYSMQFRYQF (202 aa). A signature sequence for beta-barrel assembly machinery (BAM), which recognizes the unfolded beta-barrel in the periplasm region spans residues 402–411; that stretch reads LYSMQFRYQF. The tract at residues 437–449 is minimum linker residues necessary for formation of a heat-modifiable beta-barrel; that stretch reads LVQRNNNIILEYK. 2 consecutive Big-1 domains span residues 560–653 and 660–753; these read VTDF…VIFF and ITEI…VTFF. The interval 747–934 is intimin receptor Tir-binding; sequence ATEVTFFDEL…TPNVYAVCVE (188 aa). The BIG2 domain occupies 787–833; the sequence is ASGGDGTYSWYSENTSIATVDASGKVTLNGKGSVVIKATSGDKQTVS. An intrachain disulfide couples cysteine 858 to cysteine 932.

The protein belongs to the intimin/invasin family. Homodimer. Interacts with Tir.

It localises to the cell outer membrane. Its function is as follows. An inverse autotransporter. Adhesin, which mediates attachment to the human intestine epithelial cells. Necessary for the production of attaching and effacing lesions on infected human tissue culture cells. Anchored to the outer membrane by binding to peptidoglycan (PGN) via its periplasmic domain, thus helping in receptor interactions during host invasion. PGN-binding may also aid in resisting mechanical and chemical stress during transit of the bacterium through the gastrointestinal tract of the host. The chain is Intimin from Escherichia coli O157:H7.